A 192-amino-acid chain; its full sequence is Cytochrome b-245 light chain (192 aa).

Topologically, residues 2-7 (GQIEWA) are cytoplasmic. A helical transmembrane segment spans residues 8-30 (MWANEQALASGLILITGGIVATA). At 31 to 35 (GQFAQ) the chain is on the extracellular side. A helical membrane pass occupies residues 36-53 (WYLGAYSIAAGVLICLLE). Topologically, residues 54-69 (YPRGKRSKGSTMERCG) are cytoplasmic. An intramembrane segment occupies 70–80 (QKYLTRAVKVF). Residues 81–86 (GPLTSN) are Cytoplasmic-facing. Residues 87 to 104 (YYIRAFLHLGLSVPAGFL) traverse the membrane as a helical segment. Leu105 is a topological domain (extracellular). A helical membrane pass occupies residues 106-126 (ATILGTACLAIASSIYLLAAI). The Cytoplasmic segment spans residues 127–192 (HGEHWTPIET…NPMPVTDEVV (66 aa)). The segment at 134–192 (IETKPKERPQVGGTIKQPPSNPPPRPPAEARKKPSEEEVAGVPGGGPQENPMPVTDEVV) is disordered. At Thr147 the chain carries Phosphothreonine. Lys149 participates in a covalent cross-link: Glycyl lysine isopeptide (Lys-Gly) (interchain with G-Cter in ubiquitin). The residue at position 168 (Ser168) is a Phosphoserine.

This sequence belongs to the p22phox family. In terms of assembly, component of the phagocyte NADPH oxidase core complex/cytochrome b558 complex, composed of CYBB (heavy chain (beta)) and CYBA (light chain (alpha)). Component of the phagocyte NADPH oxidase complex composed of an obligatory core heterodimer formed by the membrane proteins CYBA and CYBB and the cytosolic regulatory subunits NCF1/p47-phox, NCF2/p67-phox, NCF4/p40-phox and the small GTPase RAC1 or RAC2. Interacts with NCF1 (via SH3 domain). Interacts with SH3PXD2A. Interacts with DUOX1, DUOX2 and TPO. Interacts with NOX4; this interaction mediates superoxide generation. Interacts with calprotectin (S100A8/9). Interacts with GBP7. Interacts with NOXO1. Forms a heterodimer with NOX3 and is essential for activity and cell membrane localization of NOX3. Interacts with NOX1. Phosphorylation at Thr-147 enhances NADPH oxidase activity by promoting NCF1/p47-phox binding. In terms of processing, ubiquitinated at Lys-149 likely by RNF145.

The protein resides in the cell membrane. Subunit of NADPH oxidase complexes that is required for the NADPH oxidase activity that generates, in various cell types, superoxide from molecular oxygen utilizing NADPH as an electron donor. Subunit of the phagocyte NADPH oxidase complex that mediates the transfer of electrons from cytosolic NADPH to O2 to produce the superoxide anion (O2(-)). In the activated complex, electrons are first transferred from NADPH to flavin adenine dinucleotide (FAD) and subsequently transferred via two heme molecules to molecular oxygen, producing superoxide through an outer-sphere reaction. Activation of the NADPH oxidase complex is initiated by the assembly of cytosolic subunits of the NADPH oxidase complex with the core NADPH oxidase complex to form a complex at the plasma membrane or phagosomal membrane. This activation process is initiated by phosphorylation dependent binding of the cytosolic NCF1/p47-phox subunit to the C-terminus of CYBA/p22-phox. Aassociates with NOX3 to form a functional NADPH oxidase constitutively generating superoxide. This chain is Cytochrome b-245 light chain, found in Tursiops truncatus (Atlantic bottle-nosed dolphin).